A 68-amino-acid chain; its full sequence is Protein transport protein Sec61 subunit gamma (68 aa).

Residues 1-32 (MDQIMQFVEPSRQFVKDSIRLVKRCTKPDRKE) are Cytoplasmic-facing. A helical transmembrane segment spans residues 33 to 61 (FQKIAMATAIGFAIMGFIGFFVKLIHIPI). The Extracellular portion of the chain corresponds to 62 to 68 (NNIIVGG).

This sequence belongs to the SecE/SEC61-gamma family. As to quaternary structure, the SEC61 channel-forming translocon complex consists of channel-forming core components SEC61A1, SEC61B and SEC61G and different auxiliary components such as SEC62 and SEC63. The SEC61 channel associates with the multi-pass translocon (MPT) complex.

The protein resides in the endoplasmic reticulum membrane. Functionally, component of SEC61 channel-forming translocon complex that mediates transport of signal peptide-containing precursor polypeptides across the endoplasmic reticulum (ER). Forms a ribosome receptor and a gated pore in the ER membrane, both functions required for cotranslational translocation of nascent polypeptides. The SEC61 channel is also involved in ER membrane insertion of transmembrane proteins: it mediates membrane insertion of the first few transmembrane segments of proteins, while insertion of subsequent transmembrane regions of multi-pass membrane proteins is mediated by the multi-pass translocon (MPT) complex. The polypeptide is Protein transport protein Sec61 subunit gamma (sec61g) (Gadus morhua (Atlantic cod)).